The following is a 912-amino-acid chain: Protein translocase subunit SecA (912 aa).

Residues glutamine 87, 105–109, and aspartate 508 each bind ATP; that span reads GEGKT. The segment at 855-912 is disordered; that stretch reads QHQDAGGYGADEEVEQMQGGNAPVPVSQVTRDEPKVGRNDPCPCGSGKKYKHCHGQLS. Residues cysteine 896, cysteine 898, cysteine 907, and histidine 908 each coordinate Zn(2+). The span at 902–912 shows a compositional bias: basic residues; it reads KKYKHCHGQLS.

The protein belongs to the SecA family. Monomer and homodimer. Part of the essential Sec protein translocation apparatus which comprises SecA, SecYEG and auxiliary proteins SecDF-YajC and YidC. It depends on Zn(2+) as a cofactor.

The protein localises to the cell inner membrane. It localises to the cytoplasm. The enzyme catalyses ATP + H2O + cellular proteinSide 1 = ADP + phosphate + cellular proteinSide 2.. Its function is as follows. Part of the Sec protein translocase complex. Interacts with the SecYEG preprotein conducting channel. Has a central role in coupling the hydrolysis of ATP to the transfer of proteins into and across the cell membrane, serving both as a receptor for the preprotein-SecB complex and as an ATP-driven molecular motor driving the stepwise translocation of polypeptide chains across the membrane. The sequence is that of Protein translocase subunit SecA from Xanthomonas campestris pv. campestris (strain 8004).